A 411-amino-acid polypeptide reads, in one-letter code: MSSQQWLGDGTARRWRELHGESDWDGLLDPFDLDLRRTVIRYGEMAQATYDAFNHEKLSPHAGLSRFAARRFFERAQLPGHSAAYRVARFVYATSCVAVPEPLILRSASRARRCRESNWIGYVAVATDEGKAALGRRDIVVAWRGTVQSLEWIKDMDFVMVPPKGLLRDKASDAMVHRGWLSMYTSRDSESSHNKDSARDQVLSEVAKLVSMYQDEELSITVTGHSLGAALATLNAFDIVENGYNRAPRAAAAAAGCPVTAFVFASPRVGGHGFKRRFDGARGLGLRLLRVRNARDVVPRYPPAPPYHGVGTELAIDTGESPYLRRPGNELVWHNLECYLHGVAGARGGEAGRFKLAVERDVALANKSYGALRDEHAVPAGWWIPSNRGMVRGADGRWTLMDREEDEDSAE.

Ser226 acts as the Acyl-ester intermediate in catalysis. Catalysis depends on charge relay system residues Ser226, Asp296, and His334.

Belongs to the AB hydrolase superfamily. Lipase family.

The protein localises to the cytoplasm. Its function is as follows. Acylhydrolase that catalyzes the hydrolysis of phospholipids at the sn-1 position. The polypeptide is Phospholipase A1-II 6 (Oryza sativa subsp. japonica (Rice)).